Consider the following 81-residue polypeptide: MRSSWMFVICFAMLILYTNGRILRPETSWEDELEDDLANNKRSLACSCEDGSGRTGTHWIFDCPKGWADCGGFRCCVETSK.

The signal sequence occupies residues 1–20 (MRSSWMFVICFAMLILYTNG). Intrachain disulfides connect C46–C75, C48–C70, and C63–C76.

As to expression, expressed in ectodermal gland cells. In adult female tissues, highly transcribed in mesenteries (gametes-producing tissue) and slightly transcribed in tentacles, pharynx and physa.

Functionally, has toxic effects on zebrafish larvae. It causes contractile paralysis and twitching of the tail within 30 minutes, followed by death within 40 minutes. Does not show any toxicity when injected into arthropods (cherry shrimps or grass shrimps). The polypeptide is N.vectensis toxin 4 (Nematostella vectensis (Starlet sea anemone)).